A 1203-amino-acid polypeptide reads, in one-letter code: DNA-directed RNA polymerase subunit beta (1203 aa).

The segment covering 1174–1195 (AAQEAKAAFEAEEAEKATKAEA) has biased composition (basic and acidic residues). Residues 1174–1203 (AAQEAKAAFEAEEAEKATKAEATEEAAEQE) are disordered.

Belongs to the RNA polymerase beta chain family. The RNAP catalytic core consists of 2 alpha, 1 beta, 1 beta' and 1 omega subunit. When a sigma factor is associated with the core the holoenzyme is formed, which can initiate transcription.

It carries out the reaction RNA(n) + a ribonucleoside 5'-triphosphate = RNA(n+1) + diphosphate. Its function is as follows. DNA-dependent RNA polymerase catalyzes the transcription of DNA into RNA using the four ribonucleoside triphosphates as substrates. In Streptococcus pneumoniae (strain JJA), this protein is DNA-directed RNA polymerase subunit beta.